The sequence spans 346 residues: G-protein coupled receptor 42 (346 aa).

At 1–19 (MDTGPDQSYFSGNHWFVFS) the chain is on the extracellular side. The chain crosses the membrane as a helical span at residues 20–40 (VYLLTFLVGLPLNLLALVVFV). Topologically, residues 41 to 47 (GKLRCRP) are cytoplasmic. A helical membrane pass occupies residues 48–68 (VAVDVLLLNLTASDLLLLLFL). The Extracellular portion of the chain corresponds to 69–90 (PFRMVEAANGMHWPLPFILCPL). A helical transmembrane segment spans residues 91–111 (SGFIFFTTIYLTALFLAAVSI). At 112–132 (ERFLSVAHPLWYKTRPRLGQA) the chain is on the cytoplasmic side. The chain crosses the membrane as a helical span at residues 133–153 (GLVSVACWLLASAHCSVVYVI). Residues 154–178 (EFSGDISHSQGTNGTCYLEFRKDQL) are Extracellular-facing. N-linked (GlcNAc...) asparagine glycosylation is present at Asn-166. A helical transmembrane segment spans residues 179-199 (AILLPVRLEMAVVLFVVPLII). Over 200-222 (TSYCYSRLVWILGRGGSHRRQRR) the chain is Cytoplasmic. A helical transmembrane segment spans residues 223-243 (VAGLVAATLLNFLVCFGPYNV). Residues 244-258 (SHVVGYICGESPVWR) are Extracellular-facing. A helical membrane pass occupies residues 259-279 (IYVTLLSTLNSCVDPFVYYFS). The Cytoplasmic portion of the chain corresponds to 280-346 (SSGFQADFHE…TGGQVACAEN (67 aa)). Basic and acidic residues predominate over residues 307–330 (MELKEQKGGEEQRADRPAERKTSE). The interval 307–346 (MELKEQKGGEEQRADRPAERKTSEHSQGCGTGGQVACAEN) is disordered.

Belongs to the G-protein coupled receptor 1 family.

The protein localises to the cell membrane. G protein-coupled receptor that is activated by short chain fatty acids (SCFAs), such as propionate. Hence may play a role in the regulation of whole-body energy homeostasis and/or in intestinal immunity. This is G-protein coupled receptor 42 (GPR42) from Homo sapiens (Human).